The chain runs to 449 residues: Amidophosphoribosyltransferase (449 aa).

The propeptide occupies 1 to 9 (MRGEIMKEK). Residue C10 is the Nucleophile of the active site. Residues 10–224 (CGIFGAYSQD…PGEVIVVKDG (215 aa)) enclose the Glutamine amidotransferase type-2 domain. C239 contacts [4Fe-4S] cluster. The Mg(2+) site is built by S286, D346, and D347. [4Fe-4S] cluster is bound by residues C383, C432, and C435.

In the C-terminal section; belongs to the purine/pyrimidine phosphoribosyltransferase family. Mg(2+) is required as a cofactor. The cofactor is [4Fe-4S] cluster.

The catalysed reaction is 5-phospho-beta-D-ribosylamine + L-glutamate + diphosphate = 5-phospho-alpha-D-ribose 1-diphosphate + L-glutamine + H2O. The protein operates within purine metabolism; IMP biosynthesis via de novo pathway; N(1)-(5-phospho-D-ribosyl)glycinamide from 5-phospho-alpha-D-ribose 1-diphosphate: step 1/2. In terms of biological role, catalyzes the formation of phosphoribosylamine from phosphoribosylpyrophosphate (PRPP) and glutamine. The chain is Amidophosphoribosyltransferase from Pyrococcus horikoshii (strain ATCC 700860 / DSM 12428 / JCM 9974 / NBRC 100139 / OT-3).